The chain runs to 30 residues: Cycloviolin-C (30 aa).

The cyclopeptide (Gly-Asn) cross-link spans 1–30 (GIPCGESCVFIPCLTTVAGCSCKNKVCYRN). Intrachain disulfides connect Cys4-Cys20, Cys8-Cys22, and Cys13-Cys27.

In terms of processing, this is a cyclic peptide.

Functionally, probably participates in a plant defense mechanism. Has anti-HIV activity. In Leonia cymosa (Sacha uba), this protein is Cycloviolin-C.